Here is a 264-residue protein sequence, read N- to C-terminus: Indole-3-glycerol phosphate synthase (264 aa).

Belongs to the TrpC family.

It carries out the reaction 1-(2-carboxyphenylamino)-1-deoxy-D-ribulose 5-phosphate + H(+) = (1S,2R)-1-C-(indol-3-yl)glycerol 3-phosphate + CO2 + H2O. It participates in amino-acid biosynthesis; L-tryptophan biosynthesis; L-tryptophan from chorismate: step 4/5. This chain is Indole-3-glycerol phosphate synthase, found in Rhizorhabdus wittichii (strain DSM 6014 / CCUG 31198 / JCM 15750 / NBRC 105917 / EY 4224 / RW1) (Sphingomonas wittichii).